Reading from the N-terminus, the 426-residue chain is Glucose-6-phosphate isomerase (426 aa).

Glutamate 276 serves as the catalytic Proton donor. Catalysis depends on residues histidine 297 and lysine 413.

It belongs to the GPI family.

The protein resides in the cytoplasm. The enzyme catalyses alpha-D-glucose 6-phosphate = beta-D-fructose 6-phosphate. It functions in the pathway carbohydrate biosynthesis; gluconeogenesis. It participates in carbohydrate degradation; glycolysis; D-glyceraldehyde 3-phosphate and glycerone phosphate from D-glucose: step 2/4. Functionally, catalyzes the reversible isomerization of glucose-6-phosphate to fructose-6-phosphate. The chain is Glucose-6-phosphate isomerase from Mesoplasma florum (strain ATCC 33453 / NBRC 100688 / NCTC 11704 / L1) (Acholeplasma florum).